A 404-amino-acid chain; its full sequence is Cysteine desulfurase IscS (404 aa).

Pyridoxal 5'-phosphate contacts are provided by residues 75-76, Asn155, Gln183, and 203-205; these read AT and SAH. Lys206 is modified (N6-(pyridoxal phosphate)lysine). A pyridoxal 5'-phosphate-binding site is contributed by Thr243. The Cysteine persulfide intermediate role is filled by Cys328. A [2Fe-2S] cluster-binding site is contributed by Cys328.

It belongs to the class-V pyridoxal-phosphate-dependent aminotransferase family. NifS/IscS subfamily. As to quaternary structure, homodimer. Forms a heterotetramer with IscU, interacts with other sulfur acceptors. Requires pyridoxal 5'-phosphate as cofactor.

The protein localises to the cytoplasm. It catalyses the reaction (sulfur carrier)-H + L-cysteine = (sulfur carrier)-SH + L-alanine. The protein operates within cofactor biosynthesis; iron-sulfur cluster biosynthesis. Master enzyme that delivers sulfur to a number of partners involved in Fe-S cluster assembly, tRNA modification or cofactor biosynthesis. Catalyzes the removal of elemental sulfur atoms from cysteine to produce alanine. Functions as a sulfur delivery protein for Fe-S cluster synthesis onto IscU, an Fe-S scaffold assembly protein, as well as other S acceptor proteins. This is Cysteine desulfurase IscS from Pseudomonas syringae pv. syringae (strain B728a).